A 269-amino-acid chain; its full sequence is Tryptophan synthase alpha chain (269 aa).

Residues Glu-49 and Asp-60 each act as proton acceptor in the active site.

Belongs to the TrpA family. As to quaternary structure, tetramer of two alpha and two beta chains.

It catalyses the reaction (1S,2R)-1-C-(indol-3-yl)glycerol 3-phosphate + L-serine = D-glyceraldehyde 3-phosphate + L-tryptophan + H2O. The protein operates within amino-acid biosynthesis; L-tryptophan biosynthesis; L-tryptophan from chorismate: step 5/5. The alpha subunit is responsible for the aldol cleavage of indoleglycerol phosphate to indole and glyceraldehyde 3-phosphate. This chain is Tryptophan synthase alpha chain, found in Azotobacter vinelandii (strain DJ / ATCC BAA-1303).